The sequence spans 230 residues: Cytochrome c oxidase subunit 2 (230 aa).

Topologically, residues 1-14 (MAHPSQLGFQDAAS) are mitochondrial intermembrane. Residues 15–45 (PVMEELLHFHDHTLMIVFLISTLVLYIIMAM) traverse the membrane as a helical segment. At 46–59 (VSTKLTNKYILDSQ) the chain is on the mitochondrial matrix side. The chain crosses the membrane as a helical span at residues 60–87 (EIEIVWTILPAVILIMIALPSLRILYLM). At 88 to 230 (DEINDPHLTI…SWSSLMLEEA (143 aa)) the chain is on the mitochondrial intermembrane side. 6 residues coordinate Cu cation: His161, Cys196, Glu198, Cys200, His204, and Met207. Glu198 is a binding site for Mg(2+).

The protein belongs to the cytochrome c oxidase subunit 2 family. Component of the cytochrome c oxidase (complex IV, CIV), a multisubunit enzyme composed of 14 subunits. The complex is composed of a catalytic core of 3 subunits MT-CO1, MT-CO2 and MT-CO3, encoded in the mitochondrial DNA, and 11 supernumerary subunits COX4I, COX5A, COX5B, COX6A, COX6B, COX6C, COX7A, COX7B, COX7C, COX8 and NDUFA4, which are encoded in the nuclear genome. The complex exists as a monomer or a dimer and forms supercomplexes (SCs) in the inner mitochondrial membrane with NADH-ubiquinone oxidoreductase (complex I, CI) and ubiquinol-cytochrome c oxidoreductase (cytochrome b-c1 complex, complex III, CIII), resulting in different assemblies (supercomplex SCI(1)III(2)IV(1) and megacomplex MCI(2)III(2)IV(2)). Found in a complex with TMEM177, COA6, COX18, COX20, SCO1 and SCO2. Interacts with TMEM177 in a COX20-dependent manner. Interacts with COX20. Interacts with COX16. Cu cation is required as a cofactor.

It is found in the mitochondrion inner membrane. It carries out the reaction 4 Fe(II)-[cytochrome c] + O2 + 8 H(+)(in) = 4 Fe(III)-[cytochrome c] + 2 H2O + 4 H(+)(out). In terms of biological role, component of the cytochrome c oxidase, the last enzyme in the mitochondrial electron transport chain which drives oxidative phosphorylation. The respiratory chain contains 3 multisubunit complexes succinate dehydrogenase (complex II, CII), ubiquinol-cytochrome c oxidoreductase (cytochrome b-c1 complex, complex III, CIII) and cytochrome c oxidase (complex IV, CIV), that cooperate to transfer electrons derived from NADH and succinate to molecular oxygen, creating an electrochemical gradient over the inner membrane that drives transmembrane transport and the ATP synthase. Cytochrome c oxidase is the component of the respiratory chain that catalyzes the reduction of oxygen to water. Electrons originating from reduced cytochrome c in the intermembrane space (IMS) are transferred via the dinuclear copper A center (CU(A)) of subunit 2 and heme A of subunit 1 to the active site in subunit 1, a binuclear center (BNC) formed by heme A3 and copper B (CU(B)). The BNC reduces molecular oxygen to 2 water molecules using 4 electrons from cytochrome c in the IMS and 4 protons from the mitochondrial matrix. The polypeptide is Cytochrome c oxidase subunit 2 (MT-CO2) (Squalus acanthias (Spiny dogfish)).